A 261-amino-acid polypeptide reads, in one-letter code: Ribosome-inactivating protein PD-L1/PD-L2 (261 aa).

Residues N10 and N43 are each glycosylated (N-linked (GlcNAc...) asparagine; in PD-L1 and PD-L2). 2 disulfide bridges follow: C34-C258 and C84-C105. Residue Y72 is part of the active site. V73 contacts substrate. Substrate is bound at residue S120. Active-site residues include Y122, E175, and R178. R178 serves as a coordination point for substrate. An N-linked (GlcNAc...) asparagine; in PD-L1 glycan is attached at N255.

This sequence belongs to the ribosome-inactivating protein family. Type 1 RIP subfamily. Post-translationally, N-glycosylated. Loss of glycosylation does not affect DNA-cleaving ability. Loss of glycosylation does not affect protein synthesis inhibition, but increases adenine polynucleotide glycosidase activity likely as a consequence of the increased accessibility of substrates to the active site pocket in the absence of glycosylation. Expressed in leaves (at protein level).

It catalyses the reaction Endohydrolysis of the N-glycosidic bond at one specific adenosine on the 28S rRNA.. Its function is as follows. Inhibits protein synthesis. Has adenine polynucleotide glycosidase activity on herring sperm (hs)DNA and poly(A) substrates. Cleaves supercoiled pBR322 dsDNA. This is Ribosome-inactivating protein PD-L1/PD-L2 from Phytolacca dioica (Bella sombra tree).